The following is a 195-amino-acid chain: Translation initiation factor IF-3 (195 aa).

The disordered stretch occupies residues 158–195 (EQSEVQQRPKREGRNMIMFLSPRKTPLIKKEEDAKENN). Basic and acidic residues predominate over residues 185–195 (IKKEEDAKENN).

It belongs to the IF-3 family. In terms of assembly, monomer.

The protein resides in the cytoplasm. Its function is as follows. IF-3 binds to the 30S ribosomal subunit and shifts the equilibrium between 70S ribosomes and their 50S and 30S subunits in favor of the free subunits, thus enhancing the availability of 30S subunits on which protein synthesis initiation begins. This Prochlorococcus marinus (strain MIT 9515) protein is Translation initiation factor IF-3.